A 403-amino-acid chain; its full sequence is MAKLIVDDLDVKGKKVLVRVDFNVPIKDGVIGDDNRIVAALPTIKYIIEHGGKAILLSHLGRVKSDADKKELSLKPVAERLSELLKKPVTFVPSNEGKEVEDAINNMKDGDVVVLENTRFQDIDNDFGKRESGNDPKLGEYWASLGDMFVNDAFGTAHRSHASNVGIATAMKGNGKLAAAGYLLEKEIKYLGDAVDNPVHPFVTILGGAKVSDKIGVINNLIPKSDHILIGGGMAYTFLAAQGHEIGKSLFEADKVDLAKELLEKAGDKIVLPVDNVAATEFSNDASREVVGDDIPDNMMGLDIGPKTIAKFKDILKDAKTVVWNGPMGAFEMPNFAEGTLEIGRALANLTDATTIIGGGDSTAAAKQLGIAPKISHISTGGGASLNYLEGKVLPGIACVQDK.

Residues 21 to 23, Arg-36, 59 to 62, Arg-119, and Arg-159 each bind substrate; these read DFN and HLGR. ATP-binding positions include Lys-214, Gly-301, Glu-332, and 359-362; that span reads GGDS.

This sequence belongs to the phosphoglycerate kinase family. In terms of assembly, monomer.

It localises to the cytoplasm. It catalyses the reaction (2R)-3-phosphoglycerate + ATP = (2R)-3-phospho-glyceroyl phosphate + ADP. It participates in carbohydrate degradation; glycolysis; pyruvate from D-glyceraldehyde 3-phosphate: step 2/5. This is Phosphoglycerate kinase from Lactobacillus helveticus (strain DPC 4571).